The primary structure comprises 503 residues: AMP phosphorylase (503 aa).

Residues Gly-168, 194 to 199 (SRAITS), and Thr-203 each bind AMP. The active-site Proton donor is Asp-256. AMP contacts are provided by Ser-264 and Lys-288.

The protein belongs to the thymidine/pyrimidine-nucleoside phosphorylase family. Type 2 subfamily.

The enzyme catalyses AMP + phosphate = alpha-D-ribose 1,5-bisphosphate + adenine. The catalysed reaction is CMP + phosphate = cytosine + alpha-D-ribose 1,5-bisphosphate. It catalyses the reaction UMP + phosphate = alpha-D-ribose 1,5-bisphosphate + uracil. In terms of biological role, catalyzes the conversion of AMP and phosphate to adenine and ribose 1,5-bisphosphate (R15P). Exhibits phosphorylase activity toward CMP and UMP in addition to AMP. Functions in an archaeal AMP degradation pathway, together with R15P isomerase and RubisCO. This Thermococcus sibiricus (strain DSM 12597 / MM 739) protein is AMP phosphorylase.